A 648-amino-acid polypeptide reads, in one-letter code: Mitotic interactor and substrate of PLK1 (648 aa).

Residue Ser-77 is modified to Phosphoserine; by CDK1. Phosphothreonine occurs at positions 149 and 190. Residue Ser-220 is modified to Phosphoserine. Disordered regions lie at residues 242 to 383 and 430 to 460; these read VNDP…PEAR and KATE…GKAT. Ser-253 is modified (phosphoserine; by CDK1). The span at 255–281 shows a compositional bias: basic and acidic residues; the sequence is ETPKETPIEREIRLAQEREAELREQRG. Thr-256 carries the phosphothreonine; by CDK1 modification. Ser-318 carries the phosphoserine modification. The segment covering 325-339 has biased composition (basic and acidic residues); the sequence is MVQETQREEDHRREG. The residue at position 347 (Thr-347) is a Phosphothreonine; by CDK1. A compositionally biased stretch (polar residues) spans 349–367; the sequence is DWPSQDPQPGLQRSLSSDC. Phosphoserine is present on residues Ser-352 and Ser-364. Phosphoserine; by PLK1 occurs at positions 365 and 439. Residues 440–450 are compositionally biased toward polar residues; the sequence is ESSGRSLSSKQ. 2 positions are modified to phosphoserine: Ser-507 and Ser-509. The stretch at 511-534 forms a coiled coil; it reads DLLEREMESVLRREREVAEERRNA. A disordered region spans residues 539 to 568; sequence VFSPVPAEDESHEQDSRSSSRASGITGSYS. Ser-541 is modified (phosphoserine; by CDK1). Phosphoserine; by PLK1 is present on Ser-554. Over residues 557–568 the composition is skewed to polar residues; that stretch reads SSRASGITGSYS. Residue Ser-644 is modified to Phosphoserine.

This sequence belongs to the MISP family. As to quaternary structure, associates with F-actin. Interacts with DCTN1; this interaction regulates DCTN1 distribution at the cell cortex. Interacts with PTK2/FAK and MAPRE1. Phosphorylated by CDK1 and PLK1. CDK1 is the priming kinase for PLK1 phosphorylation. Phosphorylation by PLK1 is required for proper spindle orientation at metaphase.

Its subcellular location is the cell junction. It localises to the focal adhesion. The protein localises to the cytoplasm. The protein resides in the cytoskeleton. It is found in the cell cortex. Its function is as follows. Plays a role in mitotic spindle orientation and mitotic progression. Regulates the distribution of dynactin at the cell cortex in a PLK1-dependent manner, thus stabilizing cortical and astral microtubule attachments required for proper mitotic spindle positioning. May link microtubules to the actin cytoskeleton and focal adhesions. May be required for directed cell migration and centrosome orientation. May also be necessary for proper stacking of the Golgi apparatus. The polypeptide is Mitotic interactor and substrate of PLK1 (Mus musculus (Mouse)).